Consider the following 458-residue polypeptide: Ribulose bisphosphate carboxylase large chain (458 aa).

N6,N6,N6-trimethyllysine is present on lysine 7. Substrate-binding residues include asparagine 116 and threonine 166. Lysine 168 acts as the Proton acceptor in catalysis. Lysine 170 serves as a coordination point for substrate. Lysine 194, aspartate 196, and glutamate 197 together coordinate Mg(2+). At lysine 194 the chain carries N6-carboxylysine. Histidine 287 (proton acceptor) is an active-site residue. 3 residues coordinate substrate: arginine 288, histidine 320, and serine 372.

Belongs to the RuBisCO large chain family. Type I subfamily. Heterohexadecamer of 8 large chains and 8 small chains; disulfide-linked. The disulfide link is formed within the large subunit homodimers. Requires Mg(2+) as cofactor. The disulfide bond which can form in the large chain dimeric partners within the hexadecamer appears to be associated with oxidative stress and protein turnover.

The protein resides in the plastid. It is found in the chloroplast. The enzyme catalyses 2 (2R)-3-phosphoglycerate + 2 H(+) = D-ribulose 1,5-bisphosphate + CO2 + H2O. It catalyses the reaction D-ribulose 1,5-bisphosphate + O2 = 2-phosphoglycolate + (2R)-3-phosphoglycerate + 2 H(+). RuBisCO catalyzes two reactions: the carboxylation of D-ribulose 1,5-bisphosphate, the primary event in carbon dioxide fixation, as well as the oxidative fragmentation of the pentose substrate in the photorespiration process. Both reactions occur simultaneously and in competition at the same active site. In Gladiolus gueinzii (Coastal gladiolus), this protein is Ribulose bisphosphate carboxylase large chain.